An 84-amino-acid chain; its full sequence is DNA-directed RNA polymerase subunit Rpo5 (84 aa).

The protein belongs to the archaeal Rpo5/eukaryotic RPB5 RNA polymerase subunit family. As to quaternary structure, part of the RNA polymerase complex.

It localises to the cytoplasm. It carries out the reaction RNA(n) + a ribonucleoside 5'-triphosphate = RNA(n+1) + diphosphate. DNA-dependent RNA polymerase (RNAP) catalyzes the transcription of DNA into RNA using the four ribonucleoside triphosphates as substrates. This chain is DNA-directed RNA polymerase subunit Rpo5, found in Sulfurisphaera tokodaii (strain DSM 16993 / JCM 10545 / NBRC 100140 / 7) (Sulfolobus tokodaii).